A 491-amino-acid chain; its full sequence is PE-PGRS family protein PE_PGRS26 (491 aa).

One can recognise a PE domain in the interval 1–93 (MSNVMVVPGM…VGSYAAAEAA (93 aa)). Gly residues-rich tracts occupy residues 207–221 (NGGT…GGGL) and 229–238 (GGNGGGGDAG). Disordered regions lie at residues 207 to 238 (NGGT…GDAG), 255 to 275 (DGGA…ARGG), and 444 to 491 (AGGN…GKHG). Positions 444–485 (AGGNGGDGGPSQGGGNPGFGGDGGTGGPGGVGVPDGIGGANG) are enriched in gly residues.

The protein belongs to the mycobacterial PE family. PGRS subfamily.

Its subcellular location is the cell surface. The polypeptide is PE-PGRS family protein PE_PGRS26 (Mycobacterium tuberculosis (strain ATCC 25618 / H37Rv)).